The chain runs to 213 residues: Thymidylate kinase (213 aa).

10-17 (GLEGAGKT) lines the ATP pocket.

This sequence belongs to the thymidylate kinase family.

The enzyme catalyses dTMP + ATP = dTDP + ADP. Phosphorylation of dTMP to form dTDP in both de novo and salvage pathways of dTTP synthesis. The polypeptide is Thymidylate kinase (Salmonella arizonae (strain ATCC BAA-731 / CDC346-86 / RSK2980)).